The primary structure comprises 26 residues: Aralin B chain (26 aa).

Disulfide-linked dimer of A and B chains. In terms of processing, glycosylated. High-mannose type oligosaccharides.

Its function is as follows. Lectin specific for galactose (Gal) and its derivatives. Induces apoptosis. Has cytotoxic activity against several human cancer cell lines. Is less cytotoxic to normal human cells. The sequence is that of Aralin B chain from Aralia elata (Japanese angelica tree).